A 451-amino-acid chain; its full sequence is MQVTETLSEGLKHEFQISVPAADLDAKADAKLVDLKDKVRINGFRPGKVPVAHLKKIYGKSVMAETIDQTIRDTNTQIFTERGFRLATEPKVTMPTEEAEVEKILAGQSDLTYSVAIEVVPAITLADFKTFAVEKPVADITDADVDEAIKRLADANRSYAAKAEGAKAASGDRVKVNFKGTIDGVAFDGGTGEGIDVVIGSNTFIPGFEDQLVGIAVGETRTLKVTFPTNYLNNELAGKAAEFETTATAIEAPEDKVVDDEFAKTLGLESLDKLKELMRDRLAGEFTQATRQRVKRALLDRLDETHKFDAPPSLIDEEFNLMWNSVQAEMKSSGKTFADENTTEDKAKEEYRTIADRRVRLGLVLSEIGEKNKITVTDDEVSRAVIERARSMPGREKEVWDFYRSNPQALAQLRAPIYEDKVVDFILELANVTEKKVSKDELFKDDDDKAA.

The PPIase FKBP-type domain maps to 171–256; the sequence is GDRVKVNFKG…ATAIEAPEDK (86 aa).

It belongs to the FKBP-type PPIase family. Tig subfamily.

It localises to the cytoplasm. The enzyme catalyses [protein]-peptidylproline (omega=180) = [protein]-peptidylproline (omega=0). Its function is as follows. Involved in protein export. Acts as a chaperone by maintaining the newly synthesized protein in an open conformation. Functions as a peptidyl-prolyl cis-trans isomerase. The protein is Trigger factor of Bradyrhizobium sp. (strain ORS 278).